Here is a 125-residue protein sequence, read N- to C-terminus: Small ribosomal subunit protein uS12m (125 aa).

This sequence belongs to the universal ribosomal protein uS12 family.

It is found in the mitochondrion. In terms of biological role, protein S12 is involved in the translation initiation step. This chain is Small ribosomal subunit protein uS12m (RPS12), found in Helianthus annuus (Common sunflower).